The following is an 89-amino-acid chain: Small ribosomal subunit protein uS14 (89 aa).

The protein belongs to the universal ribosomal protein uS14 family. Part of the 30S ribosomal subunit. Contacts proteins S3 and S10.

Functionally, binds 16S rRNA, required for the assembly of 30S particles and may also be responsible for determining the conformation of the 16S rRNA at the A site. The sequence is that of Small ribosomal subunit protein uS14 from Akkermansia muciniphila (strain ATCC BAA-835 / DSM 22959 / JCM 33894 / BCRC 81048 / CCUG 64013 / CIP 107961 / Muc).